The sequence spans 362 residues: Aminomethyltransferase (362 aa).

The protein belongs to the GcvT family. As to quaternary structure, the glycine cleavage system is composed of four proteins: P, T, L and H.

The enzyme catalyses N(6)-[(R)-S(8)-aminomethyldihydrolipoyl]-L-lysyl-[protein] + (6S)-5,6,7,8-tetrahydrofolate = N(6)-[(R)-dihydrolipoyl]-L-lysyl-[protein] + (6R)-5,10-methylene-5,6,7,8-tetrahydrofolate + NH4(+). Functionally, the glycine cleavage system catalyzes the degradation of glycine. The protein is Aminomethyltransferase of Porphyromonas gingivalis (strain ATCC 33277 / DSM 20709 / CIP 103683 / JCM 12257 / NCTC 11834 / 2561).